Here is a 239-residue protein sequence, read N- to C-terminus: Large ribosomal subunit protein uL30 (239 aa).

Residues 1-37 (MSKFVPENVQKKLARDEKLRKAKAEQRKASSAQMKQR) form a disordered region. Residues 9-28 (VQKKLARDEKLRKAKAEQRK) are compositionally biased toward basic and acidic residues.

Belongs to the universal ribosomal protein uL30 family.

This is Large ribosomal subunit protein uL30 (RPL7) from Tetrahymena thermophila.